The primary structure comprises 453 residues: tRNA (guanine-N(7)-)-methyltransferase non-catalytic subunit TRM82 (453 aa).

A disordered region spans residues 69–99 (ENEEKGIKKSKTNEGNTIEKKHDAKIPVPGP). WD repeat units follow at residues 103–143 (PIYS…NDNC) and 244–286 (GHKE…DEFD).

The protein belongs to the WD repeat TRM82 family. Forms a heterodimer with the catalytic subunit TRM8.

The protein resides in the nucleus. It functions in the pathway tRNA modification; N(7)-methylguanine-tRNA biosynthesis. Functionally, required for the formation of N(7)-methylguanine at position 46 (m7G46) in tRNA. In the complex, it is required to stabilize and induce conformational changes of the catalytic subunit. The sequence is that of tRNA (guanine-N(7)-)-methyltransferase non-catalytic subunit TRM82 from Vanderwaltozyma polyspora (strain ATCC 22028 / DSM 70294 / BCRC 21397 / CBS 2163 / NBRC 10782 / NRRL Y-8283 / UCD 57-17) (Kluyveromyces polysporus).